A 456-amino-acid chain; its full sequence is GTP cyclohydrolase 1 (456 aa).

Zn(2+) is bound by residues Cys340, His343, and Cys412.

This sequence belongs to the GTP cyclohydrolase I family. In terms of assembly, homodimer. Expressed in leaves and unripe fruits.

It catalyses the reaction GTP + H2O = 7,8-dihydroneopterin 3'-triphosphate + formate + H(+). Its pathway is cofactor biosynthesis; 7,8-dihydroneopterin triphosphate biosynthesis; 7,8-dihydroneopterin triphosphate from GTP: step 1/1. In terms of biological role, GTP cyclohydrolase 1 is the first enzyme in the biosynthetic pathway leading to folic acid. The sequence is that of GTP cyclohydrolase 1 (GCH1) from Solanum lycopersicum (Tomato).